The following is a 443-amino-acid chain: Serine/threonine-protein phosphatase 2A 55 kDa regulatory subunit B beta isoform (443 aa).

WD repeat units follow at residues 22–61 (TEAD…KNQV), 87–128 (EIEE…KRPE), 171–209 (AHTY…QSFN), and 220–260 (ELTE…LCDR). At Ser-275 the chain carries Phosphoserine. WD repeat units lie at residues 279–317 (EIIS…RPVE), 334–375 (ENDC…DVTL), and 410–442 (DFSK…QDKV). Position 295 is a phosphotyrosine (Tyr-295). The residue at position 298 (Thr-298) is a Phosphothreonine.

It belongs to the phosphatase 2A regulatory subunit B family. PP2A consists of a common heterodimeric core enzyme, composed of a 36 kDa catalytic subunit (subunit C) and a 65 kDa constant regulatory subunit (PR65 or subunit A), that associates with a variety of regulatory subunits. Proteins that associate with the core dimer include three families of regulatory subunits B (the R2/B/PR55/B55, R3/B''/PR72/PR130/PR59 and R5/B'/B56 families), the 48 kDa variable regulatory subunit, viral proteins, and cell signaling molecules. Interacts with IER5 (via N- and C-terminal regions). Interacts with TOMM22. As to expression, expressed in the brain. Isoform 1 and isoform 2 are expressed in the forbrain. Isoform 1 is more strongly expressed than isoform 2 in the olfactory bulb. Isoform 1 and isoform 2 are weakly expressed in the cerebellum. Isoform 1 is expressed in the testis. Isoform 2 expression is undetectable at birth rising to adult level at day 14.

Its subcellular location is the cytoplasm. It is found in the cytoskeleton. It localises to the membrane. The protein localises to the mitochondrion. The protein resides in the mitochondrion outer membrane. Functionally, the B regulatory subunit might modulate substrate selectivity and catalytic activity, and might also direct the localization of the catalytic enzyme to a particular subcellular compartment. Within the PP2A holoenzyme complex, isoform 2 is required to promote proapoptotic activity. Isoform 2 regulates neuronal survival through the mitochondrial fission and fusion balance. The chain is Serine/threonine-protein phosphatase 2A 55 kDa regulatory subunit B beta isoform (Ppp2r2b) from Rattus norvegicus (Rat).